Reading from the N-terminus, the 401-residue chain is Voltage-gated potassium channel subunit beta-1 (401 aa).

Positions 90, 91, 97, and 119 each coordinate NADP(+). Catalysis depends on Y124, which acts as the Proton donor/acceptor. N192, S222, R223, Q248, W277, S278, P279, L280, A281, C282, K288, R298, G357, S359, Q363, E366, and N367 together coordinate NADP(+).

Belongs to the shaker potassium channel beta subunit family. Homotetramer. Interaction with tetrameric potassium channel alpha subunits gives rise to a heterooctamer. Identified in potassium channel complexes containing KCNA1, KCNA2, KCNA4, KCNA5, KCNA6, KCNAB1 and KCNAB2. Part of a complex containing KCNA1, KCNA4 and LGI1; interaction with LGI1 inhibits down-regulation of KCNA1 channel activity. Interacts with the dimer formed by GNB1 and GNG2; this enhances KCNA1 binding. Interacts with SQSTM1.

It localises to the cytoplasm. The protein localises to the membrane. It is found in the cell membrane. It catalyses the reaction a primary alcohol + NADP(+) = an aldehyde + NADPH + H(+). It carries out the reaction a secondary alcohol + NADP(+) = a ketone + NADPH + H(+). Functionally, regulatory subunit of the voltage-gated potassium (Kv) channels composed of pore-forming and potassium-conducting alpha subunits and of regulatory beta subunits. The beta-1/KCNAB1 cytoplasmic subunit mediates closure of delayed rectifier potassium channels by physically obstructing the pore via its N-terminal domain and increases the speed of channel closure for other family members. Promotes the inactivation of KCNA1, KCNA2, KCNA4, KCNA5 and KCNA6 alpha subunit-containing channels. Displays nicotinamide adenine dinucleotide phosphate (NADPH)-dependent aldoketoreductase activity by catalyzing the NADPH-dependent reduction of a variety of endogenous aldehydes and ketones. The binding of NADPH is required for efficient down-regulation of potassium channel activity. Oxidation of the bound NADPH restrains N-terminal domain from blocking the channel, thereby decreasing N-type inactivation of potassium channel activity. The sequence is that of Voltage-gated potassium channel subunit beta-1 (KCNAB1) from Bos taurus (Bovine).